The sequence spans 1020 residues: MAREHGSMRALVNSLAGLLGETDTEVPSLEPAMLMVLKSSISEFFLSTDTVSVDEAAELFPRLQFLACRAYAASHTPDAAMLAENLAGLVLWRIHQNWTDREMEAVDQMFVLLEIMNGESGVYMLSNNNLRISAKYGPSNMHLIVSTWLDTFRNVMSVAAKSTPDSLFNSKRMESIEEFSKPLVHAKFNLIYDMPFVQEGLRIVAKKINWILPFGLMVKGYKDMSMAPLTRALFLLSLVDSYFPKGTATEGSMKALTAYFRELVRTIDNSAFVPITEVNATPRTAYEVRVSSAIVHQNPYVTDTKAGMVAERVRTDAEILTSGALLSSGALSAHATAVAKLLSSNEPDDVSSRARARVAEHASNTWETIQASTTPTQVVEALVTAGFTSTHCGILERVVVDYFTRLRSTANSGPGRNDSLDYAQQVVGCVAIVGGVVFRLLLSYGFGLDYIRDYTTTISTLEPVYNELLSALGLADKGVEQTLKRSMAPRPYMNYISAARAALDDELLIVEKRTTGPGTHSAARESLLTWFDFRARDRWGVRIPDRDTTSTQVLAPITASLYSDDDLIAAASKLSFDALDAPPTQIIDDPSFAPYMLATVVLDAFNAILTSRFSADSVSQALRVLSWARDYGAGSIANVDGYRTKLTAIIASVSPFLQKDAPTPTMAHANNLEALLGELHSVVVAAIALIPERARMPVPERPSVKTSTFLAGLFLTAVYKRLETLVGHTAELTNNILGTASGIVSSIVTLNRFFNCRIMPVMGHYAVLIYPQSAQSAPFGRWRLVDVVDAVGSIYNEVSDLRADLRADVVTLKGDITSAAEALQECEALAVKTEGTRFGKLFNSLLTRHTQLARAQRGLAIRAGKLLGGSEAPGLKHVNTFLQRWGAISVMYQKATSGSTPEVNITSLANTLRHVWDEVQQERKATPPSRKFSNRDLGLAVERLMGGYPEVLDDDSNSTALTPKFNVDSWNSVNMDALRKRVTMPANIDSIRGNDSLATREYLKKEDLLAEIDAIFNNTK.

The interval 539–1020 is interaction with large tegument protein; sequence WGVRIPDRDT…EIDAIFNNTK (482 aa).

This sequence belongs to the herpesviridae inner tegument protein family. In terms of assembly, interacts (via C-terminus) with the large tegument protein/LTP (via N-terminus).

The protein localises to the virion tegument. It is found in the host cytoplasm. Its subcellular location is the host nucleus. It localises to the host Golgi apparatus. The protein resides in the host trans-Golgi network. In terms of biological role, plays an essential role in cytoplasmic secondary envelopment during viral egress. Interacts with the capsid via the large tegument protein/LTP and participates in its transport to the host trans-Golgi network (TGN) where secondary envelopment occurs. Modulates tegumentation and capsid accumulation at the viral assembly complex. This Equine herpesvirus 1 (strain Ab4p) (EHV-1) protein is Inner tegument protein.